Reading from the N-terminus, the 873-residue chain is Coatomer subunit gamma-2 (873 aa).

Basic and acidic residues predominate over residues 1-11 (MIKKFDKKDEE). The segment at 1–21 (MIKKFDKKDEESGSGSNPFQN) is disordered. HEAT repeat units lie at residues 64–101 (TEAT…ISED), 283–320 (RELA…KHPS), 321–355 (AVTA…GSES), 356–392 (SVDR…KYPR), 394–430 (HSAM…ENPE), and 467–504 (PQPS…QNDD).

The protein belongs to the COPG family. Oligomeric complex.

It is found in the cytoplasm. The protein resides in the golgi apparatus membrane. It localises to the cytoplasmic vesicle. The protein localises to the COPI-coated vesicle membrane. In terms of biological role, the coatomer is a cytosolic protein complex that binds to dilysine motifs and reversibly associates with Golgi non-clathrin-coated vesicles, which further mediate biosynthetic protein transport from the ER, via the Golgi up to the trans Golgi network. Coatomer complex is required for budding from Golgi membranes, and is essential for the retrograde Golgi-to-ER transport of dilysine-tagged proteins. The protein is Coatomer subunit gamma-2 (copg2) of Takifugu rubripes (Japanese pufferfish).